The following is a 115-amino-acid chain: Ribonuclease P protein component (115 aa).

Belongs to the RnpA family. As to quaternary structure, consists of a catalytic RNA component (M1 or rnpB) and a protein subunit.

The enzyme catalyses Endonucleolytic cleavage of RNA, removing 5'-extranucleotides from tRNA precursor.. Its function is as follows. RNaseP catalyzes the removal of the 5'-leader sequence from pre-tRNA to produce the mature 5'-terminus. It can also cleave other RNA substrates such as 4.5S RNA. The protein component plays an auxiliary but essential role in vivo by binding to the 5'-leader sequence and broadening the substrate specificity of the ribozyme. The sequence is that of Ribonuclease P protein component from Bacillus cereus (strain G9842).